Here is a 246-residue protein sequence, read N- to C-terminus: MRVVLQPAYVLHSRPYRETSALVEVFTPEYGRVGLVAKGVKRQRTHRFSLLQPFCPLLLSWTGRGDLVTLTGAEAAGPIPVLTGEGLICAFYLNELLLRLLPRRDPLEALFSVYAHSLPSLIHAQQRQQILRLFERDLLAYLGYGLILKYEAGTSRPIEAGQWYSYQLEKGPVRLLSEDLEGMKVRGHTLQALARGALADPASLGEAKRLLRWLLAFHLGDKPLKSRGLLEELRRLGNVSRKEERP.

Belongs to the RecO family.

In terms of biological role, involved in DNA repair and RecF pathway recombination. The chain is DNA repair protein RecO from Nitrosococcus oceani (strain ATCC 19707 / BCRC 17464 / JCM 30415 / NCIMB 11848 / C-107).